The following is a 334-amino-acid chain: Protein translocase subunit SecF (334 aa).

The next 6 helical transmembrane spans lie at V18–G38, G144–F164, F168–F190, S195–F217, A258–A278, and F279–I299.

It belongs to the SecD/SecF family. SecF subfamily. As to quaternary structure, forms a complex with SecD. Part of the essential Sec protein translocation apparatus which comprises SecA, SecYEG and auxiliary proteins SecDF. Other proteins may also be involved.

Its subcellular location is the cell inner membrane. In terms of biological role, part of the Sec protein translocase complex. Interacts with the SecYEG preprotein conducting channel. SecDF uses the proton motive force (PMF) to complete protein translocation after the ATP-dependent function of SecA. In Gemmatimonas aurantiaca (strain DSM 14586 / JCM 11422 / NBRC 100505 / T-27), this protein is Protein translocase subunit SecF.